The chain runs to 493 residues: Protein nucleotidyltransferase YdiU (493 aa).

ATP is bound by residues Gly81, Gly83, Arg84, Lys103, Asp115, Gly116, Arg166, and Arg173. Asp244 functions as the Proton acceptor in the catalytic mechanism. Residues Asn245 and Asp254 each contribute to the Mg(2+) site. An ATP-binding site is contributed by Asp254.

Belongs to the SELO family. Requires Mg(2+) as cofactor. Mn(2+) is required as a cofactor.

It carries out the reaction L-seryl-[protein] + ATP = 3-O-(5'-adenylyl)-L-seryl-[protein] + diphosphate. The enzyme catalyses L-threonyl-[protein] + ATP = 3-O-(5'-adenylyl)-L-threonyl-[protein] + diphosphate. It catalyses the reaction L-tyrosyl-[protein] + ATP = O-(5'-adenylyl)-L-tyrosyl-[protein] + diphosphate. The catalysed reaction is L-histidyl-[protein] + UTP = N(tele)-(5'-uridylyl)-L-histidyl-[protein] + diphosphate. It carries out the reaction L-seryl-[protein] + UTP = O-(5'-uridylyl)-L-seryl-[protein] + diphosphate. The enzyme catalyses L-tyrosyl-[protein] + UTP = O-(5'-uridylyl)-L-tyrosyl-[protein] + diphosphate. In terms of biological role, nucleotidyltransferase involved in the post-translational modification of proteins. It can catalyze the addition of adenosine monophosphate (AMP) or uridine monophosphate (UMP) to a protein, resulting in modifications known as AMPylation and UMPylation. The sequence is that of Protein nucleotidyltransferase YdiU from Shewanella frigidimarina (strain NCIMB 400).